The chain runs to 63 residues: Conotoxin Pn-B01411 (63 aa).

The N-terminal stretch at 1 to 22 (MRCFPVFIILLLLMASAPSFDA) is a signal peptide. Residues 23–49 (RPKTEDDVPLSSFRDNLKRTLRTLLDP) constitute a propeptide that is removed on maturation. Isoleucine 62 bears the Isoleucine amide mark.

The protein belongs to the conotoxin T superfamily. In terms of processing, contains 2 disulfide bonds that can be either 'C1-C3, C2-C4' or 'C1-C4, C2-C3', since these disulfide connectivities have been observed for conotoxins with cysteine framework V (for examples, see AC P0DQQ7 and AC P81755). Expressed by the venom duct.

The protein localises to the secreted. In Conus pennaceus (Feathered cone), this protein is Conotoxin Pn-B01411.